Consider the following 491-residue polypeptide: MNAAAEAEFNILLATDSYKVTHYKQYPPNTSKVYSYFECREKKTENSKVRKVKYEETVFYGLQYILNKYLKGKVVTKEKIQEAKEVYREHFQDDVFNERGWNYILEKYDGHLPIEVKAVPEGSVIPRGNVLFTVENTDPECYWLTNWIETILVQSWYPITVATNSREQKKILAKYLLETSGNLDGLEYKLHDFGYRGVSSQETAGIGASAHLVNFKGTDTVAGIALIKKYYGTKDPVPGYSVPAAEHSTITAWGKDHEKDAFEHIVTQFSSVPVSVVSDSYDIYNACEKIWGEDLRHLIVSRSTEAPLIIRPDSGNPLDTVLKVLDILGKKFPVSENSKGYKLLPPYLRVIQGDGVDINTLQEIVEGMKQKKWSIENVSFGSGGALLQKLTRDLLNCSFKCSYVVTNGLGVNVFKDPVADPNKRSKKGRLSLHRTPAGTFVTLEEGKGDLEEYGHDLLHTVFKNGKVTKSYSFDEVRKNAQLNMEQDVAPH.

N-acetylmethionine is present on Met-1. A Phosphotyrosine modification is found at Tyr-188. Arg-196 contacts diphosphate. A beta-nicotinamide D-ribonucleotide-binding site is contributed by Asp-219. Residues His-247 and Arg-311 each contribute to the diphosphate site. Beta-nicotinamide D-ribonucleotide contacts are provided by residues 311-313 (RPD), 353-354 (GD), Gly-384, and Arg-392. Position 472 is a phosphoserine (Ser-472).

The protein belongs to the NAPRTase family. Homodimer. Expressed in various tissues. At the highest level in liver and at the second highest in heart. The amount is higher in heart than in lung.

It is found in the nucleus. The protein localises to the cytoplasm. It localises to the secreted. The catalysed reaction is beta-nicotinamide D-ribonucleotide + diphosphate = 5-phospho-alpha-D-ribose 1-diphosphate + nicotinamide + H(+). It participates in cofactor biosynthesis; NAD(+) biosynthesis; nicotinamide D-ribonucleotide from 5-phospho-alpha-D-ribose 1-diphosphate and nicotinamide: step 1/1. Functionally, catalyzes the condensation of nicotinamide with 5-phosphoribosyl-1-pyrophosphate to yield nicotinamide mononucleotide, an intermediate in the biosynthesis of NAD. It is the rate limiting component in the mammalian NAD biosynthesis pathway. The secreted form behaves both as a cytokine with immunomodulating properties and an adipokine with anti-diabetic properties, it has no enzymatic activity, partly because of lack of activation by ATP, which has a low level in extracellular space and plasma. Plays a role in the modulation of circadian clock function. NAMPT-dependent oscillatory production of NAD regulates oscillation of clock target gene expression by releasing the core clock component: CLOCK-BMAL1 heterodimer from NAD-dependent SIRT1-mediated suppression. The chain is Nicotinamide phosphoribosyltransferase (Nampt) from Rattus norvegicus (Rat).